Consider the following 200-residue polypeptide: Non-specific lipid transfer protein GPI-anchored 16 (200 aa).

Positions 1–20 (MEGLTLIVVMMSSFMLGGQG) are cleaved as a signal peptide. Intrachain disulfides connect cysteine 27/cysteine 72, cysteine 38/cysteine 56, cysteine 57/cysteine 98, and cysteine 70/cysteine 107. Asparagine 87 carries N-linked (GlcNAc...) asparagine glycosylation. The interval 134–182 (SPGASKAAGTTPTQAPAPDTPADGPTGPTTKSGIRPVDQPMQPTGLAQS) is disordered. Over residues 140 to 163 (AAGTTPTQAPAPDTPADGPTGPTT) the composition is skewed to low complexity. Threonine 177 carries the GPI-anchor amidated threonine lipid modification. A propeptide spans 178-200 (GLAQSSTSPFLPLLFISLILLNL) (removed in mature form).

Belongs to the plant LTP family. In terms of tissue distribution, expressed in seedlings, preferentially in hypocotyls and roots. Also observed in siliques.

Its subcellular location is the cell membrane. In terms of biological role, essential protein involved in female gametophyte development. Probable lipid transfer protein. The polypeptide is Non-specific lipid transfer protein GPI-anchored 16 (Arabidopsis thaliana (Mouse-ear cress)).